A 169-amino-acid polypeptide reads, in one-letter code: Ribosome maturation factor RimM (169 aa).

The region spanning 91–167 is the PRC barrel domain; that stretch reads EGEYYFADLI…RIVIATDFAH (77 aa).

Belongs to the RimM family. In terms of assembly, binds ribosomal protein uS19.

The protein localises to the cytoplasm. Functionally, an accessory protein needed during the final step in the assembly of 30S ribosomal subunit, possibly for assembly of the head region. Essential for efficient processing of 16S rRNA. May be needed both before and after RbfA during the maturation of 16S rRNA. It has affinity for free ribosomal 30S subunits but not for 70S ribosomes. In Erythrobacter litoralis (strain HTCC2594), this protein is Ribosome maturation factor RimM.